The sequence spans 387 residues: SLC2A4 regulator (387 aa).

2 disordered regions span residues 1 to 97 and 139 to 179; these read MERP…RATP and EALV…PPEA. The span at 27–36 shows a compositional bias: low complexity; it reads GPGPRAAPVT. The C2H2-type zinc-finger motif lies at 200-225; that stretch reads FQCLWKSCGKVLSTASAMQRHIRLVH. The Nuclear export signal signature appears at 253 to 263; the sequence is LTDGLSSLTPV. Phosphoserine is present on residues Ser-264 and Ser-268. The interval 283-305 is disordered; the sequence is EPPALPSPLRPPAPPLPPPPVLS. A compositionally biased stretch (pro residues) spans 285–303; that stretch reads PALPSPLRPPAPPLPPPPV. The Nuclear localization signal motif lies at 351-354; the sequence is RKPR.

Interacts with MEF2A. As to expression, according to PubMed:14630949, expressed in heart, skeletal muscle, liver, kidney and pancreas; undetectable in lung, placenta or brain. According to PubMed:14625278, ubiquitously expressed, with lowest expression in brain and ileum.

It is found in the cytoplasm. The protein localises to the nucleus. Functionally, transcription factor involved in SLC2A4 and HD gene transactivation. Binds to the consensus sequence 5'-GCCGGCG-3'. In Homo sapiens (Human), this protein is SLC2A4 regulator (SLC2A4RG).